The following is a 365-amino-acid chain: Methylthioribose-1-phosphate isomerase (365 aa).

Substrate-binding positions include 53 to 55 (RGA), R90, and Q201. D242 (proton donor) is an active-site residue. Residue 252–253 (NK) participates in substrate binding.

The protein belongs to the eIF-2B alpha/beta/delta subunits family. MtnA subfamily.

The enzyme catalyses 5-(methylsulfanyl)-alpha-D-ribose 1-phosphate = 5-(methylsulfanyl)-D-ribulose 1-phosphate. It participates in amino-acid biosynthesis; L-methionine biosynthesis via salvage pathway; L-methionine from S-methyl-5-thio-alpha-D-ribose 1-phosphate: step 1/6. Catalyzes the interconversion of methylthioribose-1-phosphate (MTR-1-P) into methylthioribulose-1-phosphate (MTRu-1-P). In Methylorubrum populi (strain ATCC BAA-705 / NCIMB 13946 / BJ001) (Methylobacterium populi), this protein is Methylthioribose-1-phosphate isomerase.